Reading from the N-terminus, the 575-residue chain is Envelope glycoprotein (575 aa).

Positions 1–19 are cleaved as a signal peptide; it reads MLCILILLLHPRLCPVTKG. Over 20–517 the chain is Extracellular; sequence GLGKPSGDIY…LTGLNGLLPY (498 aa). 2 N-linked (GlcNAc...) asparagine; by host glycosylation sites follow: asparagine 126 and asparagine 239. The CXXC motif lies at 249-252; it reads CWLC. 3 disulfides stabilise this stretch: cysteine 249-cysteine 252, cysteine 249-cysteine 475, and cysteine 467-cysteine 474. N-linked (GlcNAc...) asparagine; by host glycosylation is found at asparagine 266, asparagine 271, asparagine 302, asparagine 316, asparagine 322, and asparagine 349. Residues 390–410 are fusion peptide; it reads LIPLLVGLGVSTAVATGTAGL. 2 coiled-coil regions span residues 411–461 and 471–507; these read GVAV…LLTA and QERC…DNLF. Residues 450 to 466 are immunosuppression; sequence LQNRRGLDLLTAEQGGI. The CX6CC motif lies at 467–475; sequence CLALQERCC. N-linked (GlcNAc...) asparagine; by host glycosylation occurs at asparagine 479. The helical transmembrane segment at 518-538 threads the bilayer; it reads LLPFLGPLFAIILFFSFAPWI. Topologically, residues 539–575 are cytoplasmic; it reads LRRVTALIRDQLNSLLGKPIQIHYHQLATRDLEYGRL. The short motif at 562-565 is the YXXL motif; contains endocytosis signal element; the sequence is YHQL.

In terms of assembly, the mature envelope protein (Env) consists of a trimer of SU-TM heterodimers attached by a labile interchain disulfide bond. Specific enzymatic cleavages in vivo yield mature proteins. Envelope glycoproteins are synthesized as an inactive precursor that is N-glycosylated and processed likely by host cell furin or by a furin-like protease in the Golgi to yield the mature SU and TM proteins. The cleavage site between SU and TM requires the minimal sequence [KR]-X-[KR]-R. Post-translationally, the CXXC motif is highly conserved across a broad range of retroviral envelope proteins. It is thought to participate in the formation of a labile disulfide bond possibly with the CX6CC motif present in the transmembrane protein. Isomerization of the intersubunit disulfide bond to an SU intrachain disulfide bond is thought to occur upon receptor recognition in order to allow membrane fusion.

Its subcellular location is the virion membrane. It is found in the host cell membrane. Functionally, the surface protein (SU) attaches the virus to the host cell by binding to its receptor. This interaction triggers the refolding of the transmembrane protein (TM) and is thought to activate its fusogenic potential by unmasking its fusion peptide. Fusion occurs at the host cell plasma membrane. Its function is as follows. The transmembrane protein (TM) acts as a class I viral fusion protein. Under the current model, the protein has at least 3 conformational states: pre-fusion native state, pre-hairpin intermediate state, and post-fusion hairpin state. During viral and target cell membrane fusion, the coiled coil regions (heptad repeats) assume a trimer-of-hairpins structure, positioning the fusion peptide in close proximity to the C-terminal region of the ectodomain. The formation of this structure appears to drive apposition and subsequent fusion of viral and target cell membranes. Membranes fusion leads to delivery of the nucleocapsid into the cytoplasm. The polypeptide is Envelope glycoprotein (env) (Squirrel monkey retrovirus (SMRV-H)).